The chain runs to 137 residues: Probable S-adenosyl-L-methionine-binding protein MTH_1797 (137 aa).

The 130-residue stretch at 8-137 folds into the TsaA-like domain; that stretch reads IRPVGVVRSP…YYEDIDSLGF (130 aa). Residues 25–27, 63–64, arginine 87, leucine 97, and 117–120 each bind S-adenosyl-L-methionine; these read PAQ, HL, and LDGS.

This sequence belongs to the tRNA methyltransferase O family.

This chain is Probable S-adenosyl-L-methionine-binding protein MTH_1797, found in Methanothermobacter thermautotrophicus (strain ATCC 29096 / DSM 1053 / JCM 10044 / NBRC 100330 / Delta H) (Methanobacterium thermoautotrophicum).